Consider the following 853-residue polypeptide: Transcription factor macR (853 aa).

A DNA-binding region (zn(2)-C6 fungal-type) is located at residues 18 to 45; sequence CIVCRRRKVRCGREQPECANCVRMKENC. Disordered stretches follow at residues 54–122, 138–166, 734–775, and 833–853; these read ESTG…PYPT, ANAPQINGSSTTTRDPSPAPSTSLFPTPS, ASDL…AGNK, and LGSQSTASGRRGLPDGLDFPG. 3 stretches are compositionally biased toward polar residues: residues 104-116, 141-163, and 738-752; these read PQVSANASPSPQR, PQINGSSTTTRDPSPAPSTSLFP, and RATSDQPSSDVSSTT.

The protein resides in the nucleus. Transcription factor that regulates the expression of the gene cluster that mediates the biosynthesis of macrophorins, isoprenoid epoxycyclohexenones containing cyclized drimane moieties. The sequence is that of Transcription factor macR from Penicillium terrestre.